The primary structure comprises 699 residues: Elongation factor G (699 aa).

The tr-type G domain occupies glutamate 8–isoleucine 283. GTP contacts are provided by residues alanine 17–threonine 24, aspartate 81–histidine 85, and asparagine 135–aspartate 138.

The protein belongs to the TRAFAC class translation factor GTPase superfamily. Classic translation factor GTPase family. EF-G/EF-2 subfamily.

The protein resides in the cytoplasm. Catalyzes the GTP-dependent ribosomal translocation step during translation elongation. During this step, the ribosome changes from the pre-translocational (PRE) to the post-translocational (POST) state as the newly formed A-site-bound peptidyl-tRNA and P-site-bound deacylated tRNA move to the P and E sites, respectively. Catalyzes the coordinated movement of the two tRNA molecules, the mRNA and conformational changes in the ribosome. The polypeptide is Elongation factor G (Rickettsia peacockii (strain Rustic)).